A 565-amino-acid chain; its full sequence is CTP synthase (565 aa).

The amidoligase domain stretch occupies residues 1-268; that stretch reads MQTKYIFVTG…GELVVDRFYP (268 aa). S14 provides a ligand contact to CTP. A UTP-binding site is contributed by S14. Residue 15-20 coordinates ATP; the sequence is SLGKGI. Position 55 (Y55) interacts with L-glutamine. ATP is bound at residue D72. Positions 72 and 142 each coordinate Mg(2+). CTP contacts are provided by residues 149–151, 189–194, and K225; these read DIE and KTKPTQ. Residues 189 to 194 and K225 contribute to the UTP site; that span reads KTKPTQ. One can recognise a Glutamine amidotransferase type-1 domain in the interval 301–543; it reads PIALVGKYVE…VRACTAYAHE (243 aa). G363 contacts L-glutamine. Catalysis depends on C390, which acts as the Nucleophile; for glutamine hydrolysis. Residues 391–394, E414, and R471 contribute to the L-glutamine site; that span reads LGLQ. Active-site residues include H516 and E518. The disordered stretch occupies residues 545 to 565; sequence DLVTSPQPPERKAVPLASVDM.

The protein belongs to the CTP synthase family. As to quaternary structure, homotetramer.

It carries out the reaction UTP + L-glutamine + ATP + H2O = CTP + L-glutamate + ADP + phosphate + 2 H(+). The catalysed reaction is L-glutamine + H2O = L-glutamate + NH4(+). It catalyses the reaction UTP + NH4(+) + ATP = CTP + ADP + phosphate + 2 H(+). It functions in the pathway pyrimidine metabolism; CTP biosynthesis via de novo pathway; CTP from UDP: step 2/2. Its activity is regulated as follows. Allosterically activated by GTP, when glutamine is the substrate; GTP has no effect on the reaction when ammonia is the substrate. The allosteric effector GTP functions by stabilizing the protein conformation that binds the tetrahedral intermediate(s) formed during glutamine hydrolysis. Inhibited by the product CTP, via allosteric rather than competitive inhibition. In terms of biological role, catalyzes the ATP-dependent amination of UTP to CTP with either L-glutamine or ammonia as the source of nitrogen. Regulates intracellular CTP levels through interactions with the four ribonucleotide triphosphates. In Salinibacter ruber (strain DSM 13855 / M31), this protein is CTP synthase.